Consider the following 336-residue polypeptide: Immune-associated nucleotide-binding protein 6 (336 aa).

The 209-residue stretch at Glu33–Gln241 folds into the AIG1-type G domain. The interval Gly42–Ser49 is G1. Residues Gly42–Ala50 and Ser63 contribute to the GTP site. The interval Gly69 to Arg73 is G2. The segment at Asp91–Gly94 is G3. The interval Thr161 to Asp164 is G4. Positions Asp200–Arg202 are G5. Asn201 lines the GTP pocket. A coiled-coil region spans residues His237 to Gln270.

It belongs to the TRAFAC class TrmE-Era-EngA-EngB-Septin-like GTPase superfamily. AIG1/Toc34/Toc159-like paraseptin GTPase family. IAN subfamily. Mostly expressed in pollen. Also detected in lateral roots and radicles.

The polypeptide is Immune-associated nucleotide-binding protein 6 (Arabidopsis thaliana (Mouse-ear cress)).